Reading from the N-terminus, the 2636-residue chain is Ankyrin repeat and KH domain-containing protein CBG24701 (2636 aa).

11 ANK repeats span residues 252-281 (SRIT…DPNA), 286-317 (NCNT…KVDV), 361-390 (NDNS…KNQQ), 435-464 (NLPS…RIDE), 468-500 (HKNT…DVNA), 505-534 (SGDT…DLTT), 536-564 (KITP…TIPQ), 566-595 (QLSR…DLNF), 598-627 (DERT…SVNF), 632-661 (NDAT…DPML), and 665-695 (DGVN…NMDL). Disordered stretches follow at residues 994–1030 (PIDA…TTIE), 1172–1191 (KSNR…KKGK), and 1230–1268 (NNTQ…VIDK). Residues 1006–1030 (QQTGPKTTSLTTPQPDESNGATTIE) are compositionally biased toward polar residues. Over residues 1233–1245 (QVQQQQGQQQQGQ) the composition is skewed to low complexity. Positions 1249 to 1260 (THSEGDGTERAK) are enriched in basic and acidic residues. ANK repeat units lie at residues 1273–1302 (TLET…NIEH), 1306–1335 (KGFT…AIEA), 1340–1369 (TKDT…NKEH), 1373–1402 (SDYT…EINS), 1408–1437 (LGIS…DINA), 1447–1476 (YRNT…NVEH), 1480–1509 (TGLT…DPNA), 1515–1546 (TKDT…DIRN), 1548–1577 (KGCS…DTDM), and 1581–1610 (RKMS…QFPN). A coiled-coil region spans residues 1638–1696 (RNAKKAQAETAEETANRLLQLIDDEKERDINKKQKIKDKKKQKKEAKKKFQAEQEQLSA). Residues 1669–1857 (KKQKIKDKKK…SSISERQHSW (189 aa)) are disordered. Basic residues predominate over residues 1670–1686 (KQKIKDKKKQKKEAKKK). Over residues 1698–1708 (PSKPEPVVAPE) the composition is skewed to pro residues. Residues 1709–1722 (PEPEPETEPVEEPA) are compositionally biased toward acidic residues. Basic and acidic residues predominate over residues 1811-1829 (DWQKAGKEGKKVRPKREGR). Residues 1832 to 1851 (APSSAGSSQAKHRSNTSSIS) are compositionally biased toward polar residues. Residues 1864–1929 (VKAYEFTVPG…DVVSMAVNII (66 aa)) enclose the KH domain. Disordered stretches follow at residues 1980 to 2182 (SASI…SLPS), 2196 to 2221 (FKPT…STAS), 2269 to 2292 (NSTA…SNDF), 2301 to 2320 (SNQK…NSQL), 2352 to 2417 (SQSS…TQQQ), 2444 to 2465 (MHRQ…NPYY), and 2539 to 2636 (GMMQ…SSRM). A compositionally biased stretch (polar residues) spans 1994-2008 (SQCNRSSKSHGNQAT). Low complexity predominate over residues 2025–2045 (TPPTQTQTKQQPTPSPQVQQP). The segment covering 2057–2083 (SLAQSSVPQATENVTKPTQTPPASVQQ) has biased composition (polar residues). Composition is skewed to low complexity over residues 2099–2119 (QVVQ…QRPQ) and 2139–2148 (QQHMQQIQQQ). Pro residues predominate over residues 2167–2179 (PGPPVQPQTPPQS). The span at 2269–2280 (NSTASSLNTATT) shows a compositional bias: low complexity. Residues 2281-2292 (KNDTSDWGSNDF) show a composition bias toward polar residues. Low complexity-rich tracts occupy residues 2361-2373 (QHQQ…MQDP) and 2391-2417 (PQQF…TQQQ). 3 stretches are compositionally biased toward polar residues: residues 2449–2465 (NSSS…NPYY), 2565–2574 (RSASGSSQNR), and 2583–2595 (QQPQ…TQAD). Positions 2599–2615 (RLLLQQQQQQRSSQQQQ) are enriched in low complexity. Polar residues predominate over residues 2616-2636 (NPTNQGLPQKWSNTWNSSSRM).

It belongs to the mask family.

Its subcellular location is the cytoplasm. This chain is Ankyrin repeat and KH domain-containing protein CBG24701, found in Caenorhabditis briggsae.